The sequence spans 160 residues: Putative 4-hydroxy-4-methyl-2-oxoglutarate aldolase (160 aa).

Residues 75-78 (GDLI) and Arg-97 contribute to the substrate site. A divalent metal cation is bound at residue Asp-98.

Belongs to the class II aldolase/RraA-like family. Homotrimer. A divalent metal cation is required as a cofactor.

It catalyses the reaction 4-hydroxy-4-methyl-2-oxoglutarate = 2 pyruvate. The catalysed reaction is oxaloacetate + H(+) = pyruvate + CO2. Catalyzes the aldol cleavage of 4-hydroxy-4-methyl-2-oxoglutarate (HMG) into 2 molecules of pyruvate. Also contains a secondary oxaloacetate (OAA) decarboxylase activity due to the common pyruvate enolate transition state formed following C-C bond cleavage in the retro-aldol and decarboxylation reactions. This chain is Putative 4-hydroxy-4-methyl-2-oxoglutarate aldolase, found in Rhodospirillum centenum (strain ATCC 51521 / SW).